A 264-amino-acid polypeptide reads, in one-letter code: MNVSVNIKNVTKEYRIYRTNKERMKDALIPKHKNKTFFALDDISLKAYEGDVIGLVGINGSGKSTLSNIIGGSLSPTVGKVDRNGEVSVIAISAGLSGQLTGIENIEFKMLCMGFKRKEIKAMTPKIIEFSELGEFIYQPVKKYSSGMRAKLGFSINITVNPDILVIDEALSVGDQTFAQKCLDKIYEFKEQNKTIFFVSHNLGQVRQFCTKIAWIEGGKLKDYGELDDVLPKYEAFLNDFKKKSKAEQKEFRNKLDEARFVIK.

The region spanning 5–243 is the ABC transporter domain; the sequence is VNIKNVTKEY…YEAFLNDFKK (239 aa). An ATP-binding site is contributed by 57–64; the sequence is GINGSGKS.

The protein belongs to the ABC transporter superfamily. Teichoic acids exporter (TC 3.A.1.104.1) family. As to quaternary structure, the complex is composed of two ATP-binding proteins (TagH) and two transmembrane proteins (TagG).

It localises to the cell membrane. The enzyme catalyses ATP + H2O + teichoic acidSide 1 = ADP + phosphate + teichoic acidSide 2.. Functionally, part of the ABC transporter complex TagGH involved in teichoic acids export. Responsible for energy coupling to the transport system. This Staphylococcus aureus (strain Mu50 / ATCC 700699) protein is Teichoic acids export ATP-binding protein TagH.